The sequence spans 319 residues: tRNA-cytidine(32) 2-sulfurtransferase (319 aa).

A PP-loop motif motif is present at residues 45–50; it reads SGGKDS. [4Fe-4S] cluster-binding residues include Cys120, Cys123, and Cys211.

It belongs to the TtcA family. Homodimer. Mg(2+) is required as a cofactor. [4Fe-4S] cluster serves as cofactor.

The protein localises to the cytoplasm. The catalysed reaction is cytidine(32) in tRNA + S-sulfanyl-L-cysteinyl-[cysteine desulfurase] + AH2 + ATP = 2-thiocytidine(32) in tRNA + L-cysteinyl-[cysteine desulfurase] + A + AMP + diphosphate + H(+). Its pathway is tRNA modification. Catalyzes the ATP-dependent 2-thiolation of cytidine in position 32 of tRNA, to form 2-thiocytidine (s(2)C32). The sulfur atoms are provided by the cysteine/cysteine desulfurase (IscS) system. The chain is tRNA-cytidine(32) 2-sulfurtransferase from Shewanella woodyi (strain ATCC 51908 / MS32).